Reading from the N-terminus, the 142-residue chain is UPF0102 protein Bcep1808_0248 (142 aa).

The protein belongs to the UPF0102 family.

The protein is UPF0102 protein Bcep1808_0248 of Burkholderia vietnamiensis (strain G4 / LMG 22486) (Burkholderia cepacia (strain R1808)).